The following is a 568-amino-acid chain: Probable asparagine--tRNA ligase, cytoplasmic (568 aa).

Belongs to the class-II aminoacyl-tRNA synthetase family.

The protein localises to the cytoplasm. The enzyme catalyses tRNA(Asn) + L-asparagine + ATP = L-asparaginyl-tRNA(Asn) + AMP + diphosphate + H(+). Cytosolic asparaginyl-tRNA synthetase which catalyzes the specific attachment of asparagine to its cognate tRNA. The protein is Probable asparagine--tRNA ligase, cytoplasmic (nrs1) of Schizosaccharomyces pombe (strain 972 / ATCC 24843) (Fission yeast).